Consider the following 446-residue polypeptide: Thymidine phosphorylase (446 aa).

This sequence belongs to the thymidine/pyrimidine-nucleoside phosphorylase family. As to quaternary structure, homodimer.

It catalyses the reaction thymidine + phosphate = 2-deoxy-alpha-D-ribose 1-phosphate + thymine. It participates in pyrimidine metabolism; dTMP biosynthesis via salvage pathway; dTMP from thymine: step 1/2. The enzymes which catalyze the reversible phosphorolysis of pyrimidine nucleosides are involved in the degradation of these compounds and in their utilization as carbon and energy sources, or in the rescue of pyrimidine bases for nucleotide synthesis. The protein is Thymidine phosphorylase of Psychromonas ingrahamii (strain DSM 17664 / CCUG 51855 / 37).